The chain runs to 87 residues: Small ribosomal subunit protein bS18 (87 aa).

Residues 1 to 10 (MAGKSSGDRR) show a composition bias toward basic and acidic residues. A disordered region spans residues 1 to 23 (MAGKSSGDRRKLLRGAKVGKNAA).

The protein belongs to the bacterial ribosomal protein bS18 family. As to quaternary structure, part of the 30S ribosomal subunit. Forms a tight heterodimer with protein bS6.

Functionally, binds as a heterodimer with protein bS6 to the central domain of the 16S rRNA, where it helps stabilize the platform of the 30S subunit. This is Small ribosomal subunit protein bS18 from Clavibacter sepedonicus (Clavibacter michiganensis subsp. sepedonicus).